The chain runs to 290 residues: 4-hydroxy-tetrahydrodipicolinate synthase (290 aa).

Pyruvate is bound at residue Thr-48. The active-site Proton donor/acceptor is Tyr-137. Lys-165 acts as the Schiff-base intermediate with substrate in catalysis. Ile-206 lines the pyruvate pocket.

It belongs to the DapA family. Homotetramer; dimer of dimers.

The protein localises to the cytoplasm. It catalyses the reaction L-aspartate 4-semialdehyde + pyruvate = (2S,4S)-4-hydroxy-2,3,4,5-tetrahydrodipicolinate + H2O + H(+). It functions in the pathway amino-acid biosynthesis; L-lysine biosynthesis via DAP pathway; (S)-tetrahydrodipicolinate from L-aspartate: step 3/4. Functionally, catalyzes the condensation of (S)-aspartate-beta-semialdehyde [(S)-ASA] and pyruvate to 4-hydroxy-tetrahydrodipicolinate (HTPA). The polypeptide is 4-hydroxy-tetrahydrodipicolinate synthase (Enterococcus faecalis (strain ATCC 700802 / V583)).